Reading from the N-terminus, the 147-residue chain is Hemoglobin subunit beta (147 aa).

Val2 is subject to N-acetylvaline. The 145-residue stretch at 3-147 (HLTPEEKNAV…VANALAHKYH (145 aa)) folds into the Globin domain. Thr13 carries the phosphothreonine modification. The residue at position 45 (Ser45) is a Phosphoserine. Lys60 bears the N6-acetyllysine mark. His64 is a heme b binding site. An N6-acetyllysine modification is found at Lys83. Residue His93 coordinates heme b. Residue Cys94 is modified to S-nitrosocysteine. Lys145 carries the N6-acetyllysine modification.

Belongs to the globin family. In terms of assembly, heterotetramer of two alpha chains and two beta chains. In terms of tissue distribution, red blood cells.

Its function is as follows. Involved in oxygen transport from the lung to the various peripheral tissues. The sequence is that of Hemoglobin subunit beta (HBB) from Macaca fascicularis (Crab-eating macaque).